The primary structure comprises 195 residues: Large ribosomal subunit protein mL58 (195 aa).

A mitochondrion-targeting transit peptide spans 1-18 (MIGRGVCCRSFHTAGSAW).

Belongs to the mitochondrion-specific ribosomal protein mL58 family. As to quaternary structure, component of the mitochondrial large ribosomal subunit (mt-LSU). Mature yeast 74S mitochondrial ribosomes consist of a small (37S) and a large (54S) subunit. The 37S small subunit contains a 15S ribosomal RNA (15S mt-rRNA) and 34 different proteins. The 54S large subunit contains a 21S rRNA (21S mt-rRNA) and 46 different proteins.

Its subcellular location is the mitochondrion. In terms of biological role, component of the mitochondrial ribosome (mitoribosome), a dedicated translation machinery responsible for the synthesis of mitochondrial genome-encoded proteins, including at least some of the essential transmembrane subunits of the mitochondrial respiratory chain. The mitoribosomes are attached to the mitochondrial inner membrane and translation products are cotranslationally integrated into the membrane. This is Large ribosomal subunit protein mL58 (MRPL20) from Saccharomyces cerevisiae (strain ATCC 204508 / S288c) (Baker's yeast).